We begin with the raw amino-acid sequence, 1053 residues long: CRISPR-associated endonuclease Cas9 (1053 aa).

The interval Met-1–Val-41 is ruvC-I. Asp-10 acts as the For RuvC-like nuclease domain in catalysis. Asp-10 provides a ligand contact to Mg(2+). The interval Val-41–Lys-426 is recognition lobe. The segment at Glu-435–Glu-481 is ruvC-II. 2 residues coordinate Mg(2+): Glu-477 and Glu-481. In terms of domain architecture, HNH Cas9-type spans Arg-480–Leu-646. His-557 (proton acceptor for HNH nuclease domain) is an active-site residue. Positions Arg-650 to Val-775 are ruvC-III. His-701 contributes to the Mg(2+) binding site. RNA is bound at residue Tyr-789. PAM substrate-binding regions lie at residues Tyr-882–Ala-889 and Asn-985–Glu-993. The PAM-interacting domain (PI) stretch occupies residues Lys-910–Gly-1053.

It belongs to the CRISPR-associated Cas9 family. Subtype II-A subfamily. Monomer. Binds crRNA and tracrRNA. Requires Mg(2+) as cofactor.

Functionally, CRISPR (clustered regularly interspaced short palindromic repeat) is an adaptive immune system that provides protection against mobile genetic elements (viruses, transposable elements and conjugative plasmids). CRISPR clusters contain spacers, sequences complementary to antecedent mobile elements, and target invading nucleic acids. CRISPR clusters are transcribed and processed into CRISPR RNA (crRNA). In type II CRISPR systems correct processing of pre-crRNA requires a trans-encoded small RNA (tracrRNA), endogenous ribonuclease 3 (rnc) and this protein. The tracrRNA serves as a guide for ribonuclease 3-aided processing of pre-crRNA. Subsequently Cas9/crRNA/tracrRNA endonucleolytically cleaves linear or circular dsDNA target complementary to the spacer; Cas9 is inactive in the absence of the 2 guide RNAs (gRNA). Cas9 recognizes the protospacer adjacent motif (PAM) in the CRISPR repeat sequences to help distinguish self versus nonself, as targets within the bacterial CRISPR locus do not have PAMs. PAM recognition is also required for catalytic activity. The chain is CRISPR-associated endonuclease Cas9 from Staphylococcus aureus.